We begin with the raw amino-acid sequence, 713 residues long: Probable tRNA (uracil-O(2)-)-methyltransferase (713 aa).

2 disordered regions span residues 49 to 92 and 480 to 508; these read TLRS…REGT and LHSRQGHPQSRPGGAHAPSAPQTAAHDAG. Residue Ser-76 is modified to Phosphoserine. Residues 79 to 89 are compositionally biased toward basic and acidic residues; it reads GEPESGPRASR. Ser-489 is modified (phosphoserine). The C3H1-type zinc finger occupies 669-698; that stretch reads FKTRICWFFAHHPDGCVLPAAQCPFAHGPE.

The protein belongs to the TRM44 family.

Its subcellular location is the cytoplasm. The catalysed reaction is uridine(44) in tRNA(Ser) + S-adenosyl-L-methionine = 2'-O-methyluridine(44) in tRNA(Ser) + S-adenosyl-L-homocysteine + H(+). Its function is as follows. Probable adenosyl-L-methionine (AdoMet)-dependent tRNA (uracil-O(2)-)-methyltransferase. The sequence is that of Probable tRNA (uracil-O(2)-)-methyltransferase (Trmt44) from Mus musculus (Mouse).